The primary structure comprises 151 residues: Ribosome maturation factor RimP (151 aa).

This sequence belongs to the RimP family.

The protein localises to the cytoplasm. In terms of biological role, required for maturation of 30S ribosomal subunits. The polypeptide is Ribosome maturation factor RimP (Aliivibrio fischeri (strain ATCC 700601 / ES114) (Vibrio fischeri)).